We begin with the raw amino-acid sequence, 239 residues long: Ribonuclease PH (239 aa).

Phosphate-binding positions include arginine 86 and 124 to 126 (GTR).

This sequence belongs to the RNase PH family. As to quaternary structure, homohexameric ring arranged as a trimer of dimers.

The enzyme catalyses tRNA(n+1) + phosphate = tRNA(n) + a ribonucleoside 5'-diphosphate. Its function is as follows. Phosphorolytic 3'-5' exoribonuclease that plays an important role in tRNA 3'-end maturation. Removes nucleotide residues following the 3'-CCA terminus of tRNAs; can also add nucleotides to the ends of RNA molecules by using nucleoside diphosphates as substrates, but this may not be physiologically important. Probably plays a role in initiation of 16S rRNA degradation (leading to ribosome degradation) during starvation. This is Ribonuclease PH from Rhizobium johnstonii (strain DSM 114642 / LMG 32736 / 3841) (Rhizobium leguminosarum bv. viciae).